A 439-amino-acid chain; its full sequence is 5-methylthioadenosine/S-adenosylhomocysteine deaminase (439 aa).

Residues histidine 70 and histidine 72 each contribute to the Zn(2+) site. Residues glutamate 99 and histidine 192 each coordinate substrate. A Zn(2+)-binding site is contributed by histidine 219. Residues glutamate 222 and aspartate 307 each contribute to the substrate site. Aspartate 307 serves as a coordination point for Zn(2+).

The protein belongs to the metallo-dependent hydrolases superfamily. MTA/SAH deaminase family. Zn(2+) serves as cofactor.

It carries out the reaction S-adenosyl-L-homocysteine + H2O + H(+) = S-inosyl-L-homocysteine + NH4(+). It catalyses the reaction S-methyl-5'-thioadenosine + H2O + H(+) = S-methyl-5'-thioinosine + NH4(+). Its function is as follows. Catalyzes the deamination of 5-methylthioadenosine and S-adenosyl-L-homocysteine into 5-methylthioinosine and S-inosyl-L-homocysteine, respectively. Is also able to deaminate adenosine. This Thermodesulfovibrio yellowstonii (strain ATCC 51303 / DSM 11347 / YP87) protein is 5-methylthioadenosine/S-adenosylhomocysteine deaminase.